Consider the following 404-residue polypeptide: MKLPIYLDYAATTPVDPRVAEKMMQCMTMDGIFGNPASRSHRYGWQAEEAVDIARNQVAELINADPREIVFTSGATESDNLAIKGVAHFYHKKGKHIITSKTEHKAVLDTCRQLEREGFEVTYLAPESNGLIPLETIEAAMREDTILVSIMHVNNEIGVIHDISAIGELCRSKKIIFHVDAAQSAGKLPIDVQSMKVDLISISAHKMYGPKGIGALYVRRKPRIRLEATMHGGGHERGMRSGTLATHQIVGMGEAAAIAKADMTTDNARIRTLRDRLWNGVKGIEETYINGDFEQSYCGSLNVSFNFVEGESLMMALKDLAVSSGSACTSASLEPSYVLRALGLNDEMAHSSIRFSIGRFTTEEEIDHAIETINKSIGDLREMSPLWEMFQDGVDLDKVQWAHH.

Pyridoxal 5'-phosphate contacts are provided by residues 75-76 (AT), asparagine 155, glutamine 183, and 203-205 (SAH). Residue lysine 206 is modified to N6-(pyridoxal phosphate)lysine. A pyridoxal 5'-phosphate-binding site is contributed by threonine 243. Catalysis depends on cysteine 328, which acts as the Cysteine persulfide intermediate. Position 328 (cysteine 328) interacts with [2Fe-2S] cluster.

The protein belongs to the class-V pyridoxal-phosphate-dependent aminotransferase family. NifS/IscS subfamily. Homodimer. Forms a heterotetramer with IscU, interacts with other sulfur acceptors. The cofactor is pyridoxal 5'-phosphate.

The protein resides in the cytoplasm. The catalysed reaction is (sulfur carrier)-H + L-cysteine = (sulfur carrier)-SH + L-alanine. It functions in the pathway cofactor biosynthesis; iron-sulfur cluster biosynthesis. Master enzyme that delivers sulfur to a number of partners involved in Fe-S cluster assembly, tRNA modification or cofactor biosynthesis. Catalyzes the removal of elemental sulfur atoms from cysteine to produce alanine. Functions as a sulfur delivery protein for Fe-S cluster synthesis onto IscU, an Fe-S scaffold assembly protein, as well as other S acceptor proteins. The protein is Cysteine desulfurase IscS of Shewanella sediminis (strain HAW-EB3).